A 304-amino-acid chain; its full sequence is Calmodulin-lysine N-methyltransferase (304 aa).

It belongs to the class I-like SAM-binding methyltransferase superfamily. CLNMT methyltransferase family. In terms of assembly, monomer. In terms of tissue distribution, expressed in discreet spatial and tissue-specific patterns including root tips, leaves-tips, floral buds, stamens, hydathodes, stigma, anther, siliques, apical meristems and germinating seeds. Also observed at high levels in the root stele region.

The protein localises to the cytoplasm. It localises to the nucleus. It catalyses the reaction [calmodulin]-L-lysine + S-adenosyl-L-methionine = [calmodulin]-N(6)-methyl-L-lysine + S-adenosyl-L-homocysteine + H(+). Catalyzes the trimethylation of calmodulin. Regulates roots development probably by modulating auxin signaling responses. May be involved in gravitropism. Involved in abscisic acid (ABA)-mediated and abiotic stress responses, including salt (NaCl), cold, drought and heat stresses. This chain is Calmodulin-lysine N-methyltransferase, found in Arabidopsis thaliana (Mouse-ear cress).